Consider the following 566-residue polypeptide: MDLHRAAFKMENSSYLPNPLASPALMVLASTAEASRDASIPCQQPRPFGVPVSVDKDVHIPFTNGSYTFASMYHRQGGVPGTFANRDFPPSLLHLHPQFAPPNLDCTPISMLNHSGVGAFRPFASTEDRESYQSAFTPAKRLKNCHDTESPHLRFSDADGKEYDFGTQLPSSSPGSLKVDDTGKKIFAVSGLISDREASSSPEDRNDRCKKKAAALFDSQAPICPICQVLLRPSELQEHMEQELEQLAQLPSSKNSLLKDAMAPGTPKSLLLSASIKREGESPTASPHSSATDDLHHSDRYQTFLRVRANRQTRLNARIGKMKRRKQDEGQREGSCMAEDDAVDIEHENNNRFEEYEWCGQKRIRATTLLEGGFRGSGFIMCSGKENPDSDADLDVDGDDTLEYGKPQYTEADVIPCTGEEPGEAKEREALRGAVLNGGPPSTRITPEFSKWASDEMPSTSNGESSKQEAMQKTCKNSDIEKITEDSAVTTFEALKARVRELERQLSRGDRYKCLICMDSYSMPLTSIQCWHVHCEECWLRTLGAKKLCPQCNTITAPGDLRRIYL.

K277 is covalently cross-linked (Glycyl lysine isopeptide (Lys-Gly) (interchain with G-Cter in SUMO2)). Positions 277–297 (KREGESPTASPHSSATDDLHH) are disordered. At S390 the chain carries Phosphoserine. Residues 485 to 513 (EDSAVTTFEALKARVRELERQLSRGDRYK) are a coiled coil. Positions 514-522 (CLICMDSYS) are required for targeting to the cytoplasm. An RING-type zinc finger spans residues 514-553 (CLICMDSYSMPLTSIQCWHVHCEECWLRTLGAKKLCPQCN).

In terms of assembly, interacts with SIN3B. Interacts with CTNNB1 (via Armadillo repeats 2-8). Interacts with USP7 (via MATH domain). Post-translationally, auto-ubiquitinated; leads to proteasomal degradation. Ubiquitously expressed. Abundant in brain and spinal cord, particularly in the cerebellum and cerebral cortex. In fetal tissues expressed in the cerebellum, spinal cord and cortex.

It is found in the cytoplasm. The protein localises to the nucleus. The enzyme catalyses S-ubiquitinyl-[E2 ubiquitin-conjugating enzyme]-L-cysteine + [acceptor protein]-L-lysine = [E2 ubiquitin-conjugating enzyme]-L-cysteine + N(6)-ubiquitinyl-[acceptor protein]-L-lysine.. Its pathway is protein modification; protein ubiquitination. Its function is as follows. E3 ubiquitin-protein ligase that promotes the ubiquitination and proteasomal degradation of SIN3B. Independently of its E3 ligase activity, acts as a CTNNB1 stabilizer through USP7-mediated deubiquitination of CTNNB1 promoting Wnt signaling. Plays a critical role in the regulation of nuclear lamina. The chain is E3 ubiquitin-protein ligase RNF220 (RNF220) from Homo sapiens (Human).